We begin with the raw amino-acid sequence, 213 residues long: Ras-related protein Rab-25 (213 aa).

9 residues coordinate GTP: Ser-21, Gly-24, Lys-25, Thr-26, Asn-27, Ser-38, His-39, Thr-43, and Thr-44. Residue Thr-26 participates in Mg(2+) binding. Short sequence motifs (switch) lie at residues 35–49 (NEFS…GVEF) and 67–84 (DTAG…YYRG). Residues Thr-44 and Asp-67 each contribute to the Mg(2+) site. GTP is bound by residues Gly-70, Asn-125, Lys-126, Asp-128, Ala-156, and Leu-157. Residues Cys-209 and Cys-210 are each lipidated (S-geranylgeranyl cysteine). The residue at position 210 (Cys-210) is a Cysteine methyl ester. The propeptide at 211–213 (INL) is removed in mature form.

It belongs to the small GTPase superfamily. Rab family. As to quaternary structure, interacts (GTP-bound form) with RAB11FIP1, RAB11FIP2, RAB11FIP3 and RAB11FIP4. Interacts (via the hypervariable C-terminal region) with ITGB1 (via the cytoplasmic region); the interaction is GTP-dependent. Interacts with ITGAV. Associates with the integrin alpha-V/beta-1 heterodimer. Interacts with VPS33B. Mg(2+) is required as a cofactor. In terms of tissue distribution, expression is restricted to epithelial cells. Expressed in the gastrointestinal mucosa, (highest expression seen in the ileum and colon), kidney, and lung. A very minor and variable level of expression is seen in the splenic tissue.

The protein resides in the cell membrane. The protein localises to the cell projection. Its subcellular location is the pseudopodium membrane. It localises to the cytoplasmic vesicle. It catalyses the reaction GTP + H2O = GDP + phosphate + H(+). Its activity is regulated as follows. Regulated by guanine nucleotide exchange factors (GEFs) which promote the exchange of bound GDP for free GTP. Regulated by GTPase activating proteins (GAPs) which increase the GTP hydrolysis activity. Inhibited by GDP dissociation inhibitors (GDIs) which prevent Rab-GDP dissociation. The small GTPases Rab are key regulators of intracellular membrane trafficking, from the formation of transport vesicles to their fusion with membranes. Rabs cycle between an inactive GDP-bound form and an active GTP-bound form that is able to recruit to membranes different set of downstream effectors directly responsible for vesicle formation, movement, tethering and fusion. RAB25 regulates epithelial cell differentiation, proliferation and survival, thereby playing key roles in tumorigenesis. Promotes invasive migration of cells in which it functions to localize and maintain integrin alpha-V/beta-1 at the tips of extending pseudopodia. Involved in the regulation of epithelial morphogenesis through the control of CLDN4 expression and localization at tight junctions. May selectively regulate the apical recycling pathway. Together with MYO5B regulates transcytosis. This Oryctolagus cuniculus (Rabbit) protein is Ras-related protein Rab-25 (RAB25).